Here is a 504-residue protein sequence, read N- to C-terminus: Tyrosine-protein phosphatase non-receptor type substrate 1 (504 aa).

Residues 1–30 (MEPAGPAPGRLGPLLCLLLAASCAWSGVAG) form the signal peptide. Over 31 to 373 (EEELQVIQPD…NTGSNERNIY (343 aa)) the chain is Extracellular. The Ig-like V-type domain maps to 32–137 (EELQVIQPDK…SPDDVEFKSG (106 aa)). Disulfide bonds link Cys55/Cys121 and Cys170/Cys228. 2 Ig-like C1-type domains span residues 148–247 (PSAP…ANLS) and 254–348 (PTLE…HDLK). Residues Asn245, Asn270, Asn292, and Asn319 are each glycosylated (N-linked (GlcNAc...) asparagine). An intrachain disulfide couples Cys273 to Cys331. Positions 336–355 (DGQPAVSKSHDLKVSAHPKE) are enriched in basic and acidic residues. A disordered region spans residues 336 to 364 (DGQPAVSKSHDLKVSAHPKEQGSNTAAEN). A helical membrane pass occupies residues 374–394 (IVVGVVCTLLVALLMAALYLV). The Cytoplasmic portion of the chain corresponds to 395-504 (RIRQKKAQGS…EYASVQVPRK (110 aa)). A disordered region spans residues 402-504 (QGSTSSTRLH…EYASVQVPRK (103 aa)). A compositionally biased stretch (basic and acidic residues) spans 409–421 (RLHEPEKNAREIT). Residue Tyr429 is modified to Phosphotyrosine; by Tyr-kinases. Positions 429–432 (YADL) match the SH2-binding motif. An SH3-binding motif is present at residues 439–444 (KPAPQA). The span at 446 to 467 (EPNNHTEYASIQTSPQPASEDT) shows a compositional bias: polar residues. Phosphotyrosine; by Tyr-kinases occurs at positions 453 and 470. 3 short sequence motifs (SH2-binding) span residues 453–456 (YASI), 470–473 (YADL), and 496–499 (YASV). At Tyr496 the chain carries Phosphotyrosine.

Binds PTPN11 when tyrosine-phosphorylated, except in macrophages, where it primarily binds PTPN6. Binds GRB2 in vitro. Binds FGR. Binds JAK2 irrespective of its phosphorylation status and forms a stable complex. Binds SCAP1 and/or SCAP2. The resulting complex recruits FYB1. Binds PTK2B. Interacts with TRIM2. N-glycosylated. In terms of processing, phosphorylated on tyrosine residues in response to stimulation with EGF, growth hormone, insulin and PDGF. Dephosphorylated by PTPN11. In terms of tissue distribution, ubiquitous. Highly expressed in brain. Detected on myeloid cells, but not T-cells. Detected at lower levels in heart, placenta, lung, testis, ovary, colon, liver, small intestine, prostate, spleen, kidney, skeletal muscle and pancreas.

Its subcellular location is the membrane. Functionally, immunoglobulin-like cell surface receptor for CD47. Acts as docking protein and induces translocation of PTPN6, PTPN11 and other binding partners from the cytosol to the plasma membrane. Supports adhesion of cerebellar neurons, neurite outgrowth and glial cell attachment. May play a key role in intracellular signaling during synaptogenesis and in synaptic function. Involved in the negative regulation of receptor tyrosine kinase-coupled cellular responses induced by cell adhesion, growth factors or insulin. Mediates negative regulation of phagocytosis, mast cell activation and dendritic cell activation. CD47 binding prevents maturation of immature dendritic cells and inhibits cytokine production by mature dendritic cells. Plays a role in antiviral immunity and limits new world arenavirus infection by decreasing virus internalization. Receptor for THBS1. Interaction with THBS1 stimulates phosphorylation of SIRPA. In response to THBS1, involved in ROS signaling in non-phagocytic cells, stimulating NADPH oxidase-derived ROS production. The chain is Tyrosine-protein phosphatase non-receptor type substrate 1 (SIRPA) from Homo sapiens (Human).